An 82-amino-acid polypeptide reads, in one-letter code: Sec-independent protein translocase protein TatA (82 aa).

Residues 1-21 traverse the membrane as a helical segment; the sequence is MGIFDWKHWIVILIVVVLVFG. The interval 43–82 is disordered; sequence VNTEEDDKKDQPAAQPAQPLNQPHTIDAQAQKVEEPARKD.

It belongs to the TatA/E family. The Tat system comprises two distinct complexes: a TatABC complex, containing multiple copies of TatA, TatB and TatC subunits, and a separate TatA complex, containing only TatA subunits. Substrates initially bind to the TatABC complex, which probably triggers association of the separate TatA complex to form the active translocon.

The protein localises to the cell inner membrane. In terms of biological role, part of the twin-arginine translocation (Tat) system that transports large folded proteins containing a characteristic twin-arginine motif in their signal peptide across membranes. TatA could form the protein-conducting channel of the Tat system. The chain is Sec-independent protein translocase protein TatA from Pseudomonas aeruginosa (strain LESB58).